Consider the following 251-residue polypeptide: Small ribosomal subunit protein uS3 (251 aa).

A KH type-2 domain is found at 39-109 (IRNYVQARLK…EVKIDVIEVI (71 aa)). The segment covering 222 to 239 (LKKIKDRRGEQRSRGRDS) has biased composition (basic and acidic residues). A disordered region spans residues 222 to 251 (LKKIKDRRGEQRSRGRDSRNRRRRKPRQTT). The span at 240-251 (RNRRRRKPRQTT) shows a compositional bias: basic residues.

Belongs to the universal ribosomal protein uS3 family. As to quaternary structure, part of the 30S ribosomal subunit. Forms a tight complex with proteins S10 and S14.

Its function is as follows. Binds the lower part of the 30S subunit head. Binds mRNA in the 70S ribosome, positioning it for translation. This Prosthecochloris aestuarii (strain DSM 271 / SK 413) protein is Small ribosomal subunit protein uS3.